A 160-amino-acid polypeptide reads, in one-letter code: 6,7-dimethyl-8-ribityllumazine synthase (160 aa).

5-amino-6-(D-ribitylamino)uracil is bound by residues Trp-27, 59–61 (AIE), and 81–83 (VVI). Residue 86-87 (QT) participates in (2S)-2-hydroxy-3-oxobutyl phosphate binding. His-89 (proton donor) is an active-site residue. Asn-114 lines the 5-amino-6-(D-ribitylamino)uracil pocket. Arg-128 is a binding site for (2S)-2-hydroxy-3-oxobutyl phosphate.

This sequence belongs to the DMRL synthase family. As to quaternary structure, homopentamer.

The catalysed reaction is (2S)-2-hydroxy-3-oxobutyl phosphate + 5-amino-6-(D-ribitylamino)uracil = 6,7-dimethyl-8-(1-D-ribityl)lumazine + phosphate + 2 H2O + H(+). The protein operates within cofactor biosynthesis; riboflavin biosynthesis; riboflavin from 2-hydroxy-3-oxobutyl phosphate and 5-amino-6-(D-ribitylamino)uracil: step 1/2. Functionally, catalyzes the formation of 6,7-dimethyl-8-ribityllumazine by condensation of 5-amino-6-(D-ribitylamino)uracil with 3,4-dihydroxy-2-butanone 4-phosphate. This is the penultimate step in the biosynthesis of riboflavin. The chain is 6,7-dimethyl-8-ribityllumazine synthase from Mycobacterium avium (strain 104).